Here is a 208-residue protein sequence, read N- to C-terminus: MKIVEVKHPLVKHKLGLMRENDISTKRFRELASEVGSLLTYEATADLETEKVTIEGWNGPVEIDQIKGKKITVVPILRAGLGMMEGVLENVPSARISVVGMYRNEETLEPVPYFQKLVSNIDERMALIVDPMLATGGSVIATIDLLKKAGCSSIKVLVLVAAPEGIAALEKAHPDVELYTASIDQGLNEHGYIIPGLGDAGDKIFGTK.

5-phospho-alpha-D-ribose 1-diphosphate-binding positions include Arg-78, Arg-103, and 130 to 138 (DPMLATGGS). Uracil contacts are provided by residues Ile-193 and 198–200 (GDA). Asp-199 serves as a coordination point for 5-phospho-alpha-D-ribose 1-diphosphate.

The protein belongs to the UPRTase family. Mg(2+) is required as a cofactor.

It catalyses the reaction UMP + diphosphate = 5-phospho-alpha-D-ribose 1-diphosphate + uracil. It participates in pyrimidine metabolism; UMP biosynthesis via salvage pathway; UMP from uracil: step 1/1. Its activity is regulated as follows. Allosterically activated by GTP. In terms of biological role, catalyzes the conversion of uracil and 5-phospho-alpha-D-ribose 1-diphosphate (PRPP) to UMP and diphosphate. This Salmonella agona (strain SL483) protein is Uracil phosphoribosyltransferase.